The following is a 538-amino-acid chain: Calcium-dependent protein kinase 8 (538 aa).

A disordered region spans residues 1-26; it reads MGNCCGTPATAEEGGKRRRRGKQKKA. Gly-2 is lipidated: N-myristoyl glycine. The span at 16–25 shows a compositional bias: basic residues; sequence KRRRRGKQKK. A Protein kinase domain is found at 64 to 322; it reads YELGGELGRG…AEQVLEHPWL (259 aa). ATP is bound by residues 70-78 and Lys-93; that span reads LGRGEFGIT. Residue Asp-188 is the Proton acceptor of the active site. The tract at residues 328–358 is autoinhibitory domain; it reads MPDIPLGDAVRARLQQFAAMNKLKKKALKVI. EF-hand domains follow at residues 365 to 400, 401 to 436, 437 to 472, and 473 to 508; these read EEAADIKDMFDKMDVSKNGQLTFEDFKAGIRKLGNQ, MPDSDLKILMDAADIDKNGILDYQEFVAVSIHVRKI, GNDEHIQKAFSYFDQNKSGYIEIEELREALVDEIDG, and NDEDIINSIIRDVDTDKDGKISYDEFAVMMKAGTDW. Asp-378, Ser-380, Asn-382, Gln-384, Asp-389, Asp-414, Asp-416, Asn-418, Glu-425, Asp-450, Asn-452, Ser-454, Tyr-456, Glu-461, Asp-486, Asp-488, Asp-490, Lys-492, and Glu-497 together coordinate Ca(2+).

The protein belongs to the protein kinase superfamily. Ser/Thr protein kinase family. CDPK subfamily.

The protein resides in the membrane. The catalysed reaction is L-seryl-[protein] + ATP = O-phospho-L-seryl-[protein] + ADP + H(+). It carries out the reaction L-threonyl-[protein] + ATP = O-phospho-L-threonyl-[protein] + ADP + H(+). Its activity is regulated as follows. Activated by calcium. Autophosphorylation may play an important role in the regulation of the kinase activity. Its function is as follows. May play a role in signal transduction pathways that involve calcium as a second messenger. This Oryza sativa subsp. japonica (Rice) protein is Calcium-dependent protein kinase 8.